A 202-amino-acid chain; its full sequence is LexA repressor (202 aa).

Residues 28-48 constitute a DNA-binding region (H-T-H motif); the sequence is RAEIAQRLGFRSPNAAEEHLK. Catalysis depends on for autocatalytic cleavage activity residues S119 and K156.

The protein belongs to the peptidase S24 family. In terms of assembly, homodimer.

It catalyses the reaction Hydrolysis of Ala-|-Gly bond in repressor LexA.. In terms of biological role, represses a number of genes involved in the response to DNA damage (SOS response), including recA and lexA. Binds to the 16 bp palindromic sequence 5'-CTGTATATATATACAG-3'. In the presence of single-stranded DNA, RecA interacts with LexA causing an autocatalytic cleavage which disrupts the DNA-binding part of LexA, leading to derepression of the SOS regulon and eventually DNA repair. The chain is LexA repressor from Klebsiella pneumoniae (strain 342).